Here is an 875-residue protein sequence, read N- to C-terminus: Alanine--tRNA ligase (875 aa).

Zn(2+) is bound by residues His564, His568, Cys666, and His670.

It belongs to the class-II aminoacyl-tRNA synthetase family. As to quaternary structure, homotetramer. Requires Zn(2+) as cofactor.

It is found in the cytoplasm. It carries out the reaction tRNA(Ala) + L-alanine + ATP = L-alanyl-tRNA(Ala) + AMP + diphosphate. Functionally, catalyzes the attachment of alanine to tRNA(Ala) in a two-step reaction: alanine is first activated by ATP to form Ala-AMP and then transferred to the acceptor end of tRNA(Ala). Also edits incorrectly charged Ser-tRNA(Ala) and Gly-tRNA(Ala) via its editing domain. In Klebsiella pneumoniae subsp. pneumoniae (strain ATCC 700721 / MGH 78578), this protein is Alanine--tRNA ligase.